Reading from the N-terminus, the 93-residue chain is Large ribosomal subunit protein uL23c (93 aa).

This sequence belongs to the universal ribosomal protein uL23 family. Part of the 50S ribosomal subunit.

It is found in the plastid. The protein resides in the chloroplast. In terms of biological role, binds to 23S rRNA. This is Large ribosomal subunit protein uL23c (rpl23) from Adiantum capillus-veneris (Maidenhair fern).